The following is a 911-amino-acid chain: Protein translocase subunit SecA (911 aa).

Residues Gln87, 105-109 (GEGKT), and Asp499 contribute to the ATP site. Residues Cys895, Cys897, Cys906, and His907 each coordinate Zn(2+).

This sequence belongs to the SecA family. As to quaternary structure, monomer and homodimer. Part of the essential Sec protein translocation apparatus which comprises SecA, SecYEG and auxiliary proteins SecDF-YajC and YidC. It depends on Zn(2+) as a cofactor.

The protein localises to the cell inner membrane. It is found in the cytoplasm. The enzyme catalyses ATP + H2O + cellular proteinSide 1 = ADP + phosphate + cellular proteinSide 2.. Part of the Sec protein translocase complex. Interacts with the SecYEG preprotein conducting channel. Has a central role in coupling the hydrolysis of ATP to the transfer of proteins into and across the cell membrane, serving both as a receptor for the preprotein-SecB complex and as an ATP-driven molecular motor driving the stepwise translocation of polypeptide chains across the membrane. In Novosphingobium aromaticivorans (strain ATCC 700278 / DSM 12444 / CCUG 56034 / CIP 105152 / NBRC 16084 / F199), this protein is Protein translocase subunit SecA.